A 480-amino-acid polypeptide reads, in one-letter code: UDP-N-acetylmuramate--L-alanine ligase (480 aa).

125–131 (GTHGKTT) is a binding site for ATP.

The protein belongs to the MurCDEF family.

The protein resides in the cytoplasm. The catalysed reaction is UDP-N-acetyl-alpha-D-muramate + L-alanine + ATP = UDP-N-acetyl-alpha-D-muramoyl-L-alanine + ADP + phosphate + H(+). Its pathway is cell wall biogenesis; peptidoglycan biosynthesis. Functionally, cell wall formation. This chain is UDP-N-acetylmuramate--L-alanine ligase, found in Ectopseudomonas mendocina (strain ymp) (Pseudomonas mendocina).